A 100-amino-acid polypeptide reads, in one-letter code: Small ribosomal subunit protein uS14c (100 aa).

A compositionally biased stretch (basic and acidic residues) spans 1-10; that stretch reads MARKGLIERE. The tract at residues 1 to 29 is disordered; that stretch reads MARKGLIEREKKRKKLEQKYHSIRGSSKK.

The protein belongs to the universal ribosomal protein uS14 family. In terms of assembly, part of the 30S ribosomal subunit.

The protein localises to the plastid. Its subcellular location is the chloroplast. Its function is as follows. Binds 16S rRNA, required for the assembly of 30S particles. The chain is Small ribosomal subunit protein uS14c from Acorus calamus (Sweet flag).